We begin with the raw amino-acid sequence, 85 residues long: Beta-insect depressant toxin LqhIT2 (85 aa).

The signal sequence occupies residues 1-21 (MKLLLLLIVSASMLIESLVNA). Residues 22–82 (DGYIKRRDGC…TWKSETNTCG (61 aa)) form the LCN-type CS-alpha/beta domain. Intrachain disulfides connect Cys31–Cys81, Cys35–Cys56, Cys42–Cys63, and Cys46–Cys65. Gly82 carries the post-translational modification Glycine amide.

It belongs to the long (4 C-C) scorpion toxin superfamily. Sodium channel inhibitor family. Beta subfamily. Expressed by the venom gland.

The protein resides in the secreted. Its function is as follows. Depressant insect beta-toxins cause a transient contraction paralysis followed by a slow flaccid paralysis. They bind voltage-independently at site-4 of sodium channels (Nav) and shift the voltage of activation toward more negative potentials thereby affecting sodium channel activation and promoting spontaneous and repetitive firing. This toxin is active only on insects. The sequence is that of Beta-insect depressant toxin LqhIT2 from Leiurus hebraeus (Hebrew deathstalker scorpion).